Consider the following 148-residue polypeptide: Hydrogenase expression/formation protein HoxO (148 aa).

Residues 128–148 are disordered; it reads IPVLSPESGTPSCSPMETSES. A compositionally biased stretch (polar residues) spans 134–148; that stretch reads ESGTPSCSPMETSES.

This sequence belongs to the HupG/HyaE family.

This is Hydrogenase expression/formation protein HoxO (hoxO) from Azotobacter vinelandii.